Reading from the N-terminus, the 303-residue chain is Probable 5-dehydro-4-deoxyglucarate dehydratase (303 aa).

The protein belongs to the DapA family.

The enzyme catalyses 5-dehydro-4-deoxy-D-glucarate + H(+) = 2,5-dioxopentanoate + CO2 + H2O. It participates in carbohydrate acid metabolism; D-glucarate degradation; 2,5-dioxopentanoate from D-glucarate: step 2/2. The chain is Probable 5-dehydro-4-deoxyglucarate dehydratase from Variovorax paradoxus (strain S110).